A 416-amino-acid polypeptide reads, in one-letter code: 4-hydroxy-3-methylbut-2-en-1-yl diphosphate synthase (flavodoxin) (416 aa).

Cys304, Cys307, Cys350, and Glu357 together coordinate [4Fe-4S] cluster.

Belongs to the IspG family. [4Fe-4S] cluster is required as a cofactor.

The enzyme catalyses (2E)-4-hydroxy-3-methylbut-2-enyl diphosphate + oxidized [flavodoxin] + H2O + 2 H(+) = 2-C-methyl-D-erythritol 2,4-cyclic diphosphate + reduced [flavodoxin]. Its pathway is isoprenoid biosynthesis; isopentenyl diphosphate biosynthesis via DXP pathway; isopentenyl diphosphate from 1-deoxy-D-xylulose 5-phosphate: step 5/6. Functionally, converts 2C-methyl-D-erythritol 2,4-cyclodiphosphate (ME-2,4cPP) into 1-hydroxy-2-methyl-2-(E)-butenyl 4-diphosphate. The protein is 4-hydroxy-3-methylbut-2-en-1-yl diphosphate synthase (flavodoxin) of Agrobacterium fabrum (strain C58 / ATCC 33970) (Agrobacterium tumefaciens (strain C58)).